A 342-amino-acid polypeptide reads, in one-letter code: Deoxyguanosinetriphosphate triphosphohydrolase-like protein (342 aa).

In terms of domain architecture, HD spans 75-190; the sequence is RLVHTLEVSQ…VRFADKIAYV (116 aa).

The protein belongs to the dGTPase family. Type 2 subfamily.

The polypeptide is Deoxyguanosinetriphosphate triphosphohydrolase-like protein (Clostridium perfringens (strain 13 / Type A)).